The sequence spans 447 residues: MGFGDFLSKRMQKSIEKNMKNSTLNEENIKETLKEIRLSLLEADVNIEAAKEIINNVKQKALGGYISEGASAHQQMIKIVHEELVNILGKENAPLDINKKPSVVMMVGLQGSGKTTTANKLAYLLNKKNKKKVLLVGLDIYRPGAIEQLVQLGQKTNTQVFEKGKQDPVKTAEQALEYAKENNFDVVILDTAGRLQVDQVLMKELDNLKKKTSPNEILLVVDGMSGQEIINVTNEFNDKLKLSGVVVTKLDGDARGGATLSISYLTKLPIKFIGEGEGYNALAAFYPKRMADRLMGMGDIETLFERAVENIDERSIQKTMNRMFLGQFDLEDLRNQLAQIAKMGSLNKLMKMLPINKVSESQIQEAQRKLAVFSILMDSMTLKERRDPRVLKAISRKNRIIKGSGRSEKEFNELINSFEKGKKQVLEITKMIKSGRMPNLSKGGFKF.

Residues 108-115, 190-194, and 248-251 contribute to the GTP site; these read GLQGSGKT, DTAGR, and TKLD.

It belongs to the GTP-binding SRP family. SRP54 subfamily. In terms of assembly, part of the signal recognition particle protein translocation system, which is composed of SRP and FtsY. Interacts with RNA.

The protein resides in the cytoplasm. The catalysed reaction is GTP + H2O = GDP + phosphate + H(+). Its function is as follows. Involved in targeting and insertion of nascent membrane proteins into the cytoplasmic membrane. Binds to the hydrophobic signal sequence of the ribosome-nascent chain (RNC) as it emerges from the ribosomes. The SRP-RNC complex is then targeted to the cytoplasmic membrane where it interacts with the SRP receptor FtsY. The chain is Signal recognition particle protein from Mycoplasma mycoides.